Here is a 334-residue protein sequence, read N- to C-terminus: Glycerol-3-phosphate dehydrogenase [NAD(P)+] (334 aa).

4 residues coordinate NADPH: Ser14, Tyr15, His35, and Lys109. Positions 109, 138, and 140 each coordinate sn-glycerol 3-phosphate. Ala142 lines the NADPH pocket. Positions 194, 247, 257, 258, and 259 each coordinate sn-glycerol 3-phosphate. Lys194 acts as the Proton acceptor in catalysis. Arg258 contributes to the NADPH binding site. NADPH is bound by residues Val282 and Glu284.

This sequence belongs to the NAD-dependent glycerol-3-phosphate dehydrogenase family.

The protein resides in the cytoplasm. The catalysed reaction is sn-glycerol 3-phosphate + NAD(+) = dihydroxyacetone phosphate + NADH + H(+). It carries out the reaction sn-glycerol 3-phosphate + NADP(+) = dihydroxyacetone phosphate + NADPH + H(+). It participates in membrane lipid metabolism; glycerophospholipid metabolism. Functionally, catalyzes the reduction of the glycolytic intermediate dihydroxyacetone phosphate (DHAP) to sn-glycerol 3-phosphate (G3P), the key precursor for phospholipid synthesis. In Aeromonas salmonicida (strain A449), this protein is Glycerol-3-phosphate dehydrogenase [NAD(P)+].